Reading from the N-terminus, the 238-residue chain is Testis-specific gene A8 protein (238 aa).

A disordered region spans residues 35 to 238 (GKGAKTNKRG…GEAVATTTMT (204 aa)). Over residues 39-48 (KTNKRGKRGG) the composition is skewed to basic residues. 8 tandem repeats follow at residues 79 to 93 (AAAA…PESS), 94 to 108 (AAAA…PESS), 109 to 123 (AAAA…PESS), 124 to 138 (AAAA…LESS), 153 to 158 (PAAPEA), 171 to 176 (PAAPEA), 180 to 185 (PAAPEA), and 189 to 194 (PAAPEA). The tract at residues 79-148 (AAAAAPEAAA…AAAAAPEAAA (70 aa)) is 4 X 15 AA tandem repeats of A-A-A-A-A-P-E-A-A-A-S-[PL]-E-S-S. 2 stretches are compositionally biased toward low complexity: residues 79–200 (AAAA…AAPA) and 208–220 (WEAA…AAVK). Residues 153–194 (PAAPEAAAAPEVAAAPATPAAPEATAAPAAPEAATTPAAPEA) form a 4 X 6 AA repeats of P-A-A-P-E-A region.

In terms of tissue distribution, specifically expressed in testis (at protein level).

The protein localises to the cytoplasm. Its subcellular location is the nucleus. It localises to the nucleoplasm. This chain is Testis-specific gene A8 protein, found in Mus musculus (Mouse).